Here is a 476-residue protein sequence, read N- to C-terminus: Retinoic acid receptor gamma (476 aa).

Residues 1-109 (MANSSKERLC…PPPPPRVYKP (109 aa)) form a modulating region. The span at 81-96 (STVETQSTSSEEMVPS) shows a compositional bias: low complexity. The segment at 81-102 (STVETQSTSSEEMVPSSPSPPP) is disordered. 2 consecutive NR C4-type zinc fingers follow at residues 110-130 (CFVC…CEGC) and 146-170 (CHRD…LQKC). A DNA-binding region (nuclear receptor) is located at residues 110–175 (CFVCNDKSSG…RLQKCFQVGM (66 aa)). The interval 176–205 (SKEAVRNDRNKKKKEIKEEVVLPDSYEMPP) is hinge. The short motif at 184 to 189 (RNKKKK) is the Nuclear localization signal element. The NR LBD domain maps to 206-440 (EMEELIQKVS…PLIREMLENP (235 aa)). The tract at residues 435–476 (EMLENPEAFEDGAATPKPSERSSSESSNGSPTGEDSSGSKTP) is disordered. A compositionally biased stretch (polar residues) spans 462 to 476 (NGSPTGEDSSGSKTP).

The protein belongs to the nuclear hormone receptor family. NR1 subfamily. In terms of assembly, heterodimer; with a rxr molecule. Binds DNA preferentially as a rar/rxr heterodimer. Expressed in embryos, tadpoles and various adult tissue such as kidney, testis, brain, liver, skeletal muscle and spleen.

It localises to the nucleus. Receptor for retinoic acid. Retinoic acid receptors bind as heterodimers to their target response elements in response to their ligands, all-trans or 9-cis retinoic acid, and regulate gene expression in various biological processes. The rar/rxr heterodimers bind to the retinoic acid response elements (RARE) composed of tandem 5'-AGGTCA-3' sites known as DR1-DR5. The protein is Retinoic acid receptor gamma (rarg) of Xenopus laevis (African clawed frog).